The chain runs to 1241 residues: DNA-directed RNA polymerase subunit beta (1241 aa).

This sequence belongs to the RNA polymerase beta chain family. The RNAP catalytic core consists of 2 alpha, 1 beta, 1 beta' and 1 omega subunit. When a sigma factor is associated with the core the holoenzyme is formed, which can initiate transcription.

It catalyses the reaction RNA(n) + a ribonucleoside 5'-triphosphate = RNA(n+1) + diphosphate. In terms of biological role, DNA-dependent RNA polymerase catalyzes the transcription of DNA into RNA using the four ribonucleoside triphosphates as substrates. The sequence is that of DNA-directed RNA polymerase subunit beta from Clostridium botulinum (strain Alaska E43 / Type E3).